Consider the following 318-residue polypeptide: MSAAAGPKVAFFASPAFALPVLEALRAEFEVVLVVAQPDKPVGRGLKLTPPPVAARAAELGLPLAQPHKLRGNADFAAQLRDSGADVAVTCAYGKILPAGVLEIPRFGFLNTHTSLLPRYRGAAPIQWALIRGETVTGTTIMQTDEGMDTGPVLLQEELPIRPEWTSVELSAALSEQAAALIVRALRTLETLTPQPQDEAQATHAPLLVKEDGFVRWADPAQAVLDRFRGVAAWPQTTAFFGGKRLKLAGLTLGQGKGQPGKVLQVGAGGLTVACGEGAVCIATVQPEAKKAQPAQVWAQGQNVEQGARFDLWEPPQG.

Residue 115-118 (SLLP) coordinates (6S)-5,6,7,8-tetrahydrofolate.

Belongs to the Fmt family.

The catalysed reaction is L-methionyl-tRNA(fMet) + (6R)-10-formyltetrahydrofolate = N-formyl-L-methionyl-tRNA(fMet) + (6S)-5,6,7,8-tetrahydrofolate + H(+). Functionally, attaches a formyl group to the free amino group of methionyl-tRNA(fMet). The formyl group appears to play a dual role in the initiator identity of N-formylmethionyl-tRNA by promoting its recognition by IF2 and preventing the misappropriation of this tRNA by the elongation apparatus. The protein is Methionyl-tRNA formyltransferase of Deinococcus radiodurans (strain ATCC 13939 / DSM 20539 / JCM 16871 / CCUG 27074 / LMG 4051 / NBRC 15346 / NCIMB 9279 / VKM B-1422 / R1).